Consider the following 443-residue polypeptide: Signal recognition particle 54 kDa protein (443 aa).

GTP is bound by residues 107-114, 189-193, and 247-250; these read GVQGSGKT, DTAGR, and TKLD.

The protein belongs to the GTP-binding SRP family. SRP54 subfamily. Part of the signal recognition particle protein translocation system, which is composed of SRP and FtsY. Archaeal SRP consists of a 7S RNA molecule of 300 nucleotides and two protein subunits: SRP54 and SRP19.

The protein resides in the cytoplasm. The catalysed reaction is GTP + H2O = GDP + phosphate + H(+). In terms of biological role, involved in targeting and insertion of nascent membrane proteins into the cytoplasmic membrane. Binds to the hydrophobic signal sequence of the ribosome-nascent chain (RNC) as it emerges from the ribosomes. The SRP-RNC complex is then targeted to the cytoplasmic membrane where it interacts with the SRP receptor FtsY. This is Signal recognition particle 54 kDa protein from Pyrococcus horikoshii (strain ATCC 700860 / DSM 12428 / JCM 9974 / NBRC 100139 / OT-3).